Reading from the N-terminus, the 616-residue chain is Chaperone protein HscA (616 aa).

This sequence belongs to the heat shock protein 70 family.

Its function is as follows. Chaperone involved in the maturation of iron-sulfur cluster-containing proteins. Has a low intrinsic ATPase activity which is markedly stimulated by HscB. Involved in the maturation of IscU. The sequence is that of Chaperone protein HscA from Edwardsiella ictaluri (strain 93-146).